The chain runs to 1898 residues: Protein NYNRIN (1898 aa).

Disordered regions lie at residues 289–315, 424–450, 467–533, 618–691, and 711–731; these read SNNQDGMDSAQEEGTVQATSSQDSTNH, LPSAESPAGRPDGGLGGEAALQNCPRP, DVKD…TDQS, EPTT…TDAG, and VSLLKGQGQAGRQGPQSSGTL. Residues 618-627 are compositionally biased toward polar residues; that stretch reads EPTTPKTPQA. Low complexity predominate over residues 649-672; sequence PAATVSKAPAASKAPAAPKVPVTP. Residues 792 to 942 form the RNase NYN domain; sequence LRRVVIDGSS…LGRDGPTLDE (151 aa). The segment at 968–1019 is disordered; sequence SASVTELSDDADSGPLESLPNMEEVREEKEERQDEEQRQGQGTQKAAEEDDL. The span at 990-1005 shows a compositional bias: basic and acidic residues; sequence EEVREEKEERQDEEQR. The 147-residue stretch at 1304–1450 folds into the RNase H type-1 domain; it reads LSTFVCIHMS…VDTLAKQGAQ (147 aa). 2 consecutive transmembrane segments (helical) span residues 1372 to 1392 and 1408 to 1428; these read VVFLTHCNWIFSLLWELLPLW and PSLLSYIISLTSGLSSLPFIY. The Integrase catalytic domain occupies 1609-1774; the sequence is RSTAPWSNLQ…ESRLTEPLWW (166 aa).

The protein localises to the membrane. The polypeptide is Protein NYNRIN (NYNRIN) (Homo sapiens (Human)).